The chain runs to 411 residues: Alpha-galactosidase (411 aa).

Positions M1 to G24 are cleaved as a signal peptide. A propeptide spanning residues G25–L47 is cleaved from the precursor. A glycan (N-linked (GlcNAc...) asparagine) is linked at N32. A disulfide bridge connects residues C68 and C100. Residue N145 is glycosylated (N-linked (GlcNAc...) asparagine). C148 and C179 are oxidised to a cystine. The active-site Nucleophile is D177. E210–E214 provides a ligand contact to substrate. Catalysis depends on D232, which acts as the Proton donor. N352 is a glycosylation site (N-linked (GlcNAc...) asparagine).

The protein belongs to the glycosyl hydrolase 27 family.

It catalyses the reaction Hydrolysis of terminal, non-reducing alpha-D-galactose residues in alpha-D-galactosides, including galactose oligosaccharides, galactomannans and galactolipids.. Its function is as follows. Involved in the hydrolysis of the galactomannan, it splits alpha-linked galactose moieties. It is particularly suitable for the hydrolysis of guar gum to a gum with improved gelling properties. Preferentially cleaves alpha-1,6 glycoside linkages. The polypeptide is Alpha-galactosidase (Cyamopsis tetragonoloba (Guar)).